Reading from the N-terminus, the 211-residue chain is FMN-dependent NADH:quinone oxidoreductase (211 aa).

FMN contacts are provided by residues 17–19 and 99–102; these read SYS and MWNF.

This sequence belongs to the azoreductase type 1 family. In terms of assembly, homodimer. FMN is required as a cofactor.

It catalyses the reaction 2 a quinone + NADH + H(+) = 2 a 1,4-benzosemiquinone + NAD(+). The catalysed reaction is N,N-dimethyl-1,4-phenylenediamine + anthranilate + 2 NAD(+) = 2-(4-dimethylaminophenyl)diazenylbenzoate + 2 NADH + 2 H(+). Quinone reductase that provides resistance to thiol-specific stress caused by electrophilic quinones. Its function is as follows. Also exhibits azoreductase activity. Catalyzes the reductive cleavage of the azo bond in aromatic azo compounds to the corresponding amines. The protein is FMN-dependent NADH:quinone oxidoreductase of Exiguobacterium sp. (strain ATCC BAA-1283 / AT1b).